The sequence spans 422 residues: Trichothecene biosynthesis transcription regulator TRI10 (422 aa).

Belongs to the TRI10 transcription regulator family.

The protein resides in the nucleus. Its function is as follows. Transcriptional activator of all of the trichothecene biosynthesis genes. Acts upstream of the cluster-encoded transcription factor TRI6 and is necessary for full expression of both the other trichothecene genes and the genes for the primary metabolic pathway that precedes the trichothecene biosynthetic pathway. This chain is Trichothecene biosynthesis transcription regulator TRI10, found in Trichoderma arundinaceum.